A 368-amino-acid polypeptide reads, in one-letter code: Dihydroorotate dehydrogenase (quinone) (368 aa).

Residues 67–71 and Thr-91 contribute to the FMN site; that span reads AGFDK. Lys-71 provides a ligand contact to substrate. 116–120 contacts substrate; it reads NRMGF. FMN contacts are provided by Asn-146 and Asn-179. Asn-179 lines the substrate pocket. The active-site Nucleophile is Ser-182. Asn-184 contacts substrate. The FMN site is built by Lys-222 and Thr-250. Residue 251 to 252 participates in substrate binding; the sequence is NT. Residues Gly-276, Gly-305, and 326 to 327 contribute to the FMN site; that span reads YS.

Belongs to the dihydroorotate dehydrogenase family. Type 2 subfamily. Monomer. It depends on FMN as a cofactor.

It is found in the cell membrane. The enzyme catalyses (S)-dihydroorotate + a quinone = orotate + a quinol. It functions in the pathway pyrimidine metabolism; UMP biosynthesis via de novo pathway; orotate from (S)-dihydroorotate (quinone route): step 1/1. Functionally, catalyzes the conversion of dihydroorotate to orotate with quinone as electron acceptor. The sequence is that of Dihydroorotate dehydrogenase (quinone) from Streptomyces avermitilis (strain ATCC 31267 / DSM 46492 / JCM 5070 / NBRC 14893 / NCIMB 12804 / NRRL 8165 / MA-4680).